A 58-amino-acid polypeptide reads, in one-letter code: Mitochondrial import receptor subunit TOM7 homolog (58 aa).

Over Met1–Asp16 the chain is Cytoplasmic. A helical transmembrane segment spans residues Ile17 to Phe35. Residues Lys36–Gly58 are Mitochondrial intermembrane-facing.

It belongs to the Tom7 family. In terms of assembly, forms part of the preprotein translocase complex of the outer mitochondrial membrane (TOM complex).

It localises to the mitochondrion outer membrane. The sequence is that of Mitochondrial import receptor subunit TOM7 homolog (tomm-7) from Caenorhabditis elegans.